We begin with the raw amino-acid sequence, 439 residues long: Xylose isomerase (439 aa).

Residues His-101 and Asp-104 contribute to the active site. Mg(2+) contacts are provided by Glu-232, Glu-268, His-271, Asp-296, Asp-307, Asp-309, and Asp-339.

This sequence belongs to the xylose isomerase family. As to quaternary structure, homotetramer. Mg(2+) serves as cofactor.

It is found in the cytoplasm. It catalyses the reaction alpha-D-xylose = alpha-D-xylulofuranose. This Haemophilus influenzae (strain PittGG) protein is Xylose isomerase.